Here is a 40-residue protein sequence, read N- to C-terminus: Alpha-conotoxin-like Qc1.4b (40 aa).

The propeptide occupies 1–19; it reads SDGRNTAANDKASDLMALR. 2 disulfide bridges follow: Cys22/Cys28 and Cys23/Cys36. A lacks the Ser-Xaa-Pro motif that is crucial for potent interaction with nAChR region spans residues 24–26; sequence PNP. Cys36 is subject to Cysteine amide. Positions 37–40 are excised as a propeptide; the sequence is GGGR.

The protein belongs to the conotoxin A superfamily. In terms of tissue distribution, expressed by the venom duct.

The protein localises to the secreted. Alpha-conotoxins act on postsynaptic membranes, they bind to the nicotinic acetylcholine receptors (nAChR) and thus inhibit them. Has possibly a distinct nAChR binding mode from other alpha-conotoxins, due to a different three residue motif (lacks the Ser-Xaa-Pro motif). The sequence is that of Alpha-conotoxin-like Qc1.4b from Conus quercinus (Oak cone).